The following is a 145-amino-acid chain: MESIWRIATGQDPSREDYEGIEFWSNPERSGWLTKQGDYIKTWRRRWFVLKRGKLLWFKDQAAAGIRGSTPRGVISVGDCLTVKGAEDVVNKPFAFELSSGSYTMFFIADNEKEKEEWINSIGRSIVQHSRSVTDSEVLDYDHRR.

Residues 26-127 (NPERSGWLTK…WINSIGRSIV (102 aa)) form the PH domain. Residues 29 to 53 (RSGWLTKQGDYIKTWRRRWFVLKRG) form a binds specifically PtdIns3P region.

As to quaternary structure, binds PtdIns3P. In terms of tissue distribution, ubiquitously expressed.

It localises to the cytoplasm. Binds specifically to phosphatidylinositol 3-phosphate (PtdIns3P), but not to other phosphoinositides. In Arabidopsis thaliana (Mouse-ear cress), this protein is Pleckstrin homology domain-containing protein 1 (PH1).